The following is a 571-amino-acid chain: Adenine deaminase (571 aa).

Belongs to the metallo-dependent hydrolases superfamily. Adenine deaminase family. It depends on Mn(2+) as a cofactor.

It carries out the reaction adenine + H2O + H(+) = hypoxanthine + NH4(+). The protein is Adenine deaminase of Dehalococcoides mccartyi (strain ATCC BAA-2266 / KCTC 15142 / 195) (Dehalococcoides ethenogenes (strain 195)).